Reading from the N-terminus, the 713-residue chain is Protein-glucosylgalactosylhydroxylysine glucosidase (713 aa).

The first 21 residues, 1–21 (MIINSQEYLQPPQWWNERVEA), serve as a signal peptide directing secretion. N-linked (GlcNAc...) asparagine glycans are attached at residues Asn-104, Asn-160, Asn-171, Asn-186, and Asn-283. 317–318 (WD) contributes to the substrate binding site. Asn-361 is a glycosylation site (N-linked (GlcNAc...) asparagine). Glu-451 functions as the Proton donor in the catalytic mechanism. Residues Asn-457 and Asn-481 are each glycosylated (N-linked (GlcNAc...) asparagine). 521-522 (KQ) serves as a coordination point for substrate. Residues Asn-535, Asn-576, and Asn-662 are each glycosylated (N-linked (GlcNAc...) asparagine).

It belongs to the glycosyl hydrolase 65 family.

Its subcellular location is the secreted. The catalysed reaction is (5R)-5-O-[alpha-D-glucosyl-(1-&gt;2)-beta-D-galactosyl]-5-hydroxy-L-lysyl-[collagen] + H2O = (5R)-5-O-(beta-D-galactosyl)-5-hydroxy-L-lysyl-[collagen] + D-glucose. In terms of biological role, catalyzes the hydrolysis of glucose from the disaccharide unit linked to hydroxylysine residues of collagen and collagen-like proteins. In Dictyostelium discoideum (Social amoeba), this protein is Protein-glucosylgalactosylhydroxylysine glucosidase.